The primary structure comprises 131 residues: Glycine cleavage system H protein (131 aa).

Residues 24–106 (RAIVGISDHA…YGEGWIMVIE (83 aa)) enclose the Lipoyl-binding domain. Lysine 65 is subject to N6-lipoyllysine.

It belongs to the GcvH family. The glycine cleavage system is composed of four proteins: P, T, L and H. Requires (R)-lipoate as cofactor.

Its function is as follows. The glycine cleavage system catalyzes the degradation of glycine. The H protein shuttles the methylamine group of glycine from the P protein to the T protein. The protein is Glycine cleavage system H protein of Xylella fastidiosa (strain M12).